Reading from the N-terminus, the 230-residue chain is Modulator of macroautophagy TMEM150B (230 aa).

Methionine 1 is a topological domain (cytoplasmic). A helical transmembrane segment spans residues tryptophan 2 to valine 22. Residues tyrosine 23–glutamine 50 lie on the Extracellular side of the membrane. N-linked (GlcNAc...) asparagine glycans are attached at residues asparagine 29 and asparagine 33. Residues serine 51–isoleucine 71 form a helical membrane-spanning segment. Residues arginine 72–serine 83 lie on the Cytoplasmic side of the membrane. Residues valine 84–glycine 104 traverse the membrane as a helical segment. At asparagine 105–histidine 115 the chain is on the extracellular side. A helical membrane pass occupies residues leucine 116 to leucine 136. The Cytoplasmic portion of the chain corresponds to threonine 137–glycine 150. A helical membrane pass occupies residues proline 151–leucine 171. Over lysine 172–glutamate 183 the chain is Extracellular. The helical transmembrane segment at tryptophan 184 to leucine 204 threads the bilayer. Over aspartate 205–isoleucine 230 the chain is Cytoplasmic.

This sequence belongs to the DRAM/TMEM150 family.

The protein resides in the cell membrane. It is found in the endosome membrane. It localises to the cytoplasmic vesicle. The protein localises to the autophagosome membrane. Modulator of macroautophagy that causes accumulation of autophagosomes under basal conditions and enhances autophagic flux. Represses cell death and promotes long-term clonogenic survival of cells grown in the absence of glucose in a macroautophagy-independent manner. May have some role in extracellular matrix engulfment or growth factor receptor recycling, both of which can modulate cell survival. This Xenopus tropicalis (Western clawed frog) protein is Modulator of macroautophagy TMEM150B.